A 247-amino-acid polypeptide reads, in one-letter code: tRNA (guanine-N(1)-)-methyltransferase (247 aa).

Residues glycine 115 and 134–139 contribute to the S-adenosyl-L-methionine site; that span reads IGDFVL.

Belongs to the RNA methyltransferase TrmD family. As to quaternary structure, homodimer.

It is found in the cytoplasm. It carries out the reaction guanosine(37) in tRNA + S-adenosyl-L-methionine = N(1)-methylguanosine(37) in tRNA + S-adenosyl-L-homocysteine + H(+). Its function is as follows. Specifically methylates guanosine-37 in various tRNAs. The polypeptide is tRNA (guanine-N(1)-)-methyltransferase (Anaeromyxobacter dehalogenans (strain 2CP-C)).